A 352-amino-acid polypeptide reads, in one-letter code: Holliday junction branch migration complex subunit RuvB (352 aa).

The large ATPase domain (RuvB-L) stretch occupies residues 4–191 (TDKFSAPDRV…FGIVARLEFY (188 aa)). ATP-binding positions include L30, R31, G72, K75, T76, T77, 138 to 140 (EDY), R181, Y191, and R228. T76 is a Mg(2+) binding site. The small ATPAse domain (RuvB-S) stretch occupies residues 192–262 (TAEELARIVT…IADAALAMLD (71 aa)). A head domain (RuvB-H) region spans residues 265-352 (RVGFDLMDRK…GDSGDLIDGE (88 aa)). DNA contacts are provided by R301, R320, and R325.

Belongs to the RuvB family. Homohexamer. Forms an RuvA(8)-RuvB(12)-Holliday junction (HJ) complex. HJ DNA is sandwiched between 2 RuvA tetramers; dsDNA enters through RuvA and exits via RuvB. An RuvB hexamer assembles on each DNA strand where it exits the tetramer. Each RuvB hexamer is contacted by two RuvA subunits (via domain III) on 2 adjacent RuvB subunits; this complex drives branch migration. In the full resolvosome a probable DNA-RuvA(4)-RuvB(12)-RuvC(2) complex forms which resolves the HJ.

The protein resides in the cytoplasm. The catalysed reaction is ATP + H2O = ADP + phosphate + H(+). Its function is as follows. The RuvA-RuvB-RuvC complex processes Holliday junction (HJ) DNA during genetic recombination and DNA repair, while the RuvA-RuvB complex plays an important role in the rescue of blocked DNA replication forks via replication fork reversal (RFR). RuvA specifically binds to HJ cruciform DNA, conferring on it an open structure. The RuvB hexamer acts as an ATP-dependent pump, pulling dsDNA into and through the RuvAB complex. RuvB forms 2 homohexamers on either side of HJ DNA bound by 1 or 2 RuvA tetramers; 4 subunits per hexamer contact DNA at a time. Coordinated motions by a converter formed by DNA-disengaged RuvB subunits stimulates ATP hydrolysis and nucleotide exchange. Immobilization of the converter enables RuvB to convert the ATP-contained energy into a lever motion, pulling 2 nucleotides of DNA out of the RuvA tetramer per ATP hydrolyzed, thus driving DNA branch migration. The RuvB motors rotate together with the DNA substrate, which together with the progressing nucleotide cycle form the mechanistic basis for DNA recombination by continuous HJ branch migration. Branch migration allows RuvC to scan DNA until it finds its consensus sequence, where it cleaves and resolves cruciform DNA. This is Holliday junction branch migration complex subunit RuvB from Cupriavidus pinatubonensis (strain JMP 134 / LMG 1197) (Cupriavidus necator (strain JMP 134)).